Here is a 338-residue protein sequence, read N- to C-terminus: DNA-directed RNA polymerase subunit alpha (338 aa).

An alpha N-terminal domain (alpha-NTD) region spans residues 1 to 234 (MIHKNWAELI…DQLSIFVNFE (234 aa)). The tract at residues 250–338 (FNPLLLKKVD…DLAKRFEDQF (89 aa)) is alpha C-terminal domain (alpha-CTD).

Belongs to the RNA polymerase alpha chain family. As to quaternary structure, homodimer. The RNAP catalytic core consists of 2 alpha, 1 beta, 1 beta' and 1 omega subunit. When a sigma factor is associated with the core the holoenzyme is formed, which can initiate transcription.

The catalysed reaction is RNA(n) + a ribonucleoside 5'-triphosphate = RNA(n+1) + diphosphate. In terms of biological role, DNA-dependent RNA polymerase catalyzes the transcription of DNA into RNA using the four ribonucleoside triphosphates as substrates. This is DNA-directed RNA polymerase subunit alpha from Cereibacter sphaeroides (strain ATCC 17029 / ATH 2.4.9) (Rhodobacter sphaeroides).